The chain runs to 349 residues: Galactose-1-phosphate uridylyltransferase (349 aa).

29–32 (RAKR) serves as a coordination point for UDP-alpha-D-glucose. C53 and C56 together coordinate Zn(2+). UDP-alpha-D-glucose is bound at residue 78–79 (ND). H116 is a binding site for Zn(2+). UDP-alpha-D-glucose-binding positions include N154 and 160-162 (GCS). Residue H165 participates in Zn(2+) binding. H167 acts as the Tele-UMP-histidine intermediate in catalysis. Q169 is a binding site for UDP-alpha-D-glucose. Fe cation-binding residues include E183, H282, H297, and H299. UDP-alpha-D-glucose contacts are provided by residues 312-313 (KF), 317-318 (YE), and Q324.

This sequence belongs to the galactose-1-phosphate uridylyltransferase type 1 family. Requires Zn(2+) as cofactor.

It carries out the reaction alpha-D-galactose 1-phosphate + UDP-alpha-D-glucose = alpha-D-glucose 1-phosphate + UDP-alpha-D-galactose. It participates in carbohydrate metabolism; galactose metabolism. This Haemophilus influenzae (strain ATCC 51907 / DSM 11121 / KW20 / Rd) protein is Galactose-1-phosphate uridylyltransferase (galT).